Reading from the N-terminus, the 366-residue chain is Ribosome-binding ATPase YchF (366 aa).

The region spanning 3–259 (LTAGIVGLPN…LEGEEKQMFL (257 aa)) is the OBG-type G domain. Residue 12 to 17 (NVGKST) coordinates ATP. Mg(2+) is bound by residues S16 and T36. Residues 281–364 (GLATYFTAGE…QDGDVIHFRF (84 aa)) form the TGS domain.

It belongs to the TRAFAC class OBG-HflX-like GTPase superfamily. OBG GTPase family. YchF/OLA1 subfamily. The cofactor is Mg(2+).

In terms of biological role, ATPase that binds to both the 70S ribosome and the 50S ribosomal subunit in a nucleotide-independent manner. In Bacillus subtilis (strain 168), this protein is Ribosome-binding ATPase YchF.